The chain runs to 250 residues: MNILITNDDGIASSGIKALETILQKEHNTYLIAPLRERSATSMALSIYDSMRVERINDNHYIVDGYPADCVNIGLHGEIFPKIDLVLSGINRGVNMGHDVHYSGTVGAARHGAIHKKLSLAVSSGNIAKDYDYIREAEFVRKFINEYSSQLKVGVVYNMNIPSDFISSMENLRVTKLGKRTYEDTYSQKNIIGGIADFYLGGSELGHSTEEGTDFTAFFSGKISLTPLSLDQTDFSILTQLSDSLSKNIS.

4 residues coordinate a divalent metal cation: Asp8, Asp9, Ser39, and Asn91.

This sequence belongs to the SurE nucleotidase family. A divalent metal cation is required as a cofactor.

It localises to the cytoplasm. It catalyses the reaction a ribonucleoside 5'-phosphate + H2O = a ribonucleoside + phosphate. Functionally, nucleotidase that shows phosphatase activity on nucleoside 5'-monophosphates. The polypeptide is 5'-nucleotidase SurE (Leptospira interrogans serogroup Icterohaemorrhagiae serovar copenhageni (strain Fiocruz L1-130)).